A 746-amino-acid polypeptide reads, in one-letter code: 4-hydroxy-3-methylbut-2-en-1-yl diphosphate synthase (flavodoxin) (746 aa).

[4Fe-4S] cluster contacts are provided by C653, C656, C687, and E694.

Belongs to the IspG family. It depends on [4Fe-4S] cluster as a cofactor.

It catalyses the reaction (2E)-4-hydroxy-3-methylbut-2-enyl diphosphate + oxidized [flavodoxin] + H2O + 2 H(+) = 2-C-methyl-D-erythritol 2,4-cyclic diphosphate + reduced [flavodoxin]. Its pathway is isoprenoid biosynthesis; isopentenyl diphosphate biosynthesis via DXP pathway; isopentenyl diphosphate from 1-deoxy-D-xylulose 5-phosphate: step 5/6. In terms of biological role, converts 2C-methyl-D-erythritol 2,4-cyclodiphosphate (ME-2,4cPP) into 1-hydroxy-2-methyl-2-(E)-butenyl 4-diphosphate. This Chlorobaculum tepidum (strain ATCC 49652 / DSM 12025 / NBRC 103806 / TLS) (Chlorobium tepidum) protein is 4-hydroxy-3-methylbut-2-en-1-yl diphosphate synthase (flavodoxin).